The primary structure comprises 761 residues: BMP/retinoic acid-inducible neural-specific protein 1 (761 aa).

Residues 1 to 22 (MNWRLVEFLYLLFIWDHILVQP) form the signal peptide. Residues 68-251 (RYKIYREFAR…FVQSALSYIM (184 aa)) enclose the MACPF domain. 7 N-linked (GlcNAc...) asparagine glycosylation sites follow: N156, N433, N443, N553, N599, N631, and N677.

The protein belongs to the BRINP family.

It is found in the cytoplasm. Its function is as follows. Plays a role in neurogenesis and brain development. May suppress cell cycle progression in postmitotic neurons by inhibiting G1/S transition. The polypeptide is BMP/retinoic acid-inducible neural-specific protein 1 (BRINP1) (Gallus gallus (Chicken)).